The chain runs to 735 residues: Probable E3 ubiquitin-protein ligase MID2 (735 aa).

An RING-type zinc finger spans residues 30–80 (CPICLELFEDPLLLPCAHSLCFSCAHRILVSSCSSGESIEPITAFQCPTCR). The segment at 137-184 (IACQFCEQDPPRDAVKTCITCEVSYCDRCLRATHPNKKPFTSHRLVEP) adopts a B box-type 1; degenerate zinc-finger fold. The B box-type 2 zinc finger occupies 190 to 232 (LRGITCLDHENEKVNMYCVSDDQLICALCKLVGRHRDHQVASL). Zn(2+)-binding residues include Cys-195, His-198, Cys-218, and His-224. Residues 233–301 (NDRFEKLKQT…IIQQRKQMIA (69 aa)) are a coiled coil. The COS domain occupies 340 to 399 (LKENDQARFLQSAKNIAERVAMATASSQVLIPDINFNDAFENFALDFSREKKLLEGLDYL). The region spanning 398–531 (YLTAPNPPSI…RNSEPTRLKT (134 aa)) is the Fibronectin type-III domain. The B30.2/SPRY domain maps to 516-709 (INQAGSRNSE…ILSGLPAPDF (194 aa)).

This sequence belongs to the TRIM/RBCC family. Homodimer or heterodimer with MID1. Interacts with IGBP1. In terms of processing, phosphorylated on serine and threonine residues. As to expression, low level in fetal kidney and lung, and in adult prostate, ovary and small intestine.

The protein resides in the cytoplasm. It is found in the cytoskeleton. The enzyme catalyses S-ubiquitinyl-[E2 ubiquitin-conjugating enzyme]-L-cysteine + [acceptor protein]-L-lysine = [E2 ubiquitin-conjugating enzyme]-L-cysteine + N(6)-ubiquitinyl-[acceptor protein]-L-lysine.. It participates in protein modification; protein ubiquitination. E3 ubiquitin ligase that plays a role in microtubule stabilization. Mediates the 'Lys-48'-linked polyubiquitination of LRRK2 to drive its localization to microtubules and its proteasomal degradation in neurons. This ubiquitination inhibits LRRK2 kinase activation by RAB29. This is Probable E3 ubiquitin-protein ligase MID2 (MID2) from Homo sapiens (Human).